A 514-amino-acid polypeptide reads, in one-letter code: MRWSIATAIASTAKGFLHLHHHFLKNSNPGIVLSPSLRFRFWVRAFSGTTIDYREVLRSGLHNIKFDDAFHLFVLMAYSYPLPSIVEFNKVLTAIAKMQMYDVVINLWKRIENAEGIEISPDLYTCNILVNCFCRCFQPSSALSYLGKMMKLGIEPDIVTASSLVNGFCLSNSIKDAVYVAGQMEKMGIKRDVVVDTILIDTLCKNRLVVPALEVLKRMKDRGISPNVVTYSSLITGLCKSGRLADAERRLHEMDSKKINPNVITFSALIDAYAKRGKLSKVDSVYKMMIQMSIDPNVFTYSSLIYGLCMHNRVDEAIKMLDLMISKGCTPNVVTYSTLANGFFKSSRVDDGIKLLDDMPQRGVAANTVSCNTLIKGYFQAGKIDLALGVFGYMTSNGLIPNIRSYNIVLAGLFANGEVEKALSRFEHMQKTRNDLDIITYTIMIHGMCKACMVKEAYDLFYKLKFKRVEPDFKAYTIMIAELNRAGMRTEADALNRFYQKHVRQNESAPAEVS.

PPR repeat units lie at residues aspartate 122–proline 156, aspartate 157–arginine 191, aspartate 192–proline 226, asparagine 227–proline 261, asparagine 262–proline 296, asparagine 297–proline 331, asparagine 332–alanine 366, asparagine 367–proline 401, asparagine 402–leucine 436, aspartate 437–proline 471, and aspartate 472–proline 510.

Belongs to the PPR family. P subfamily.

In Arabidopsis thaliana (Mouse-ear cress), this protein is Pentatricopeptide repeat-containing protein At4g26800.